The chain runs to 84 residues: Small ribosomal subunit protein bS18 (84 aa).

This sequence belongs to the bacterial ribosomal protein bS18 family. In terms of assembly, part of the 30S ribosomal subunit. Forms a tight heterodimer with protein bS6.

In terms of biological role, binds as a heterodimer with protein bS6 to the central domain of the 16S rRNA, where it helps stabilize the platform of the 30S subunit. This chain is Small ribosomal subunit protein bS18, found in Mycoplasma mobile (strain ATCC 43663 / 163K / NCTC 11711) (Mesomycoplasma mobile).